Here is a 626-residue protein sequence, read N- to C-terminus: Chaperone protein HtpG (626 aa).

The interval 1–339 (MSTNQETRGF…SNDLPLNVSR (339 aa)) is a; substrate-binding. The tract at residues 340-555 (EILQDNKVTA…NDQMTTQMAK (216 aa)) is b. A c region spans residues 556-626 (LFAAAGQPVP…FIKRVNSLLS (71 aa)).

The protein belongs to the heat shock protein 90 family. Homodimer.

The protein resides in the cytoplasm. Functionally, molecular chaperone. Has ATPase activity. The chain is Chaperone protein HtpG from Histophilus somni (strain 129Pt) (Haemophilus somnus).